The sequence spans 338 residues: Glycerol-3-phosphate dehydrogenase [NAD(P)+] (338 aa).

NADPH-binding residues include S11, W12, H32, R33, and K106. Sn-glycerol 3-phosphate-binding residues include K106, G137, and S139. Residue A141 participates in NADPH binding. Residues K192, D245, S255, R256, and N257 each coordinate sn-glycerol 3-phosphate. K192 serves as the catalytic Proton acceptor. R256 serves as a coordination point for NADPH. Positions 280 and 282 each coordinate NADPH.

Belongs to the NAD-dependent glycerol-3-phosphate dehydrogenase family.

Its subcellular location is the cytoplasm. The catalysed reaction is sn-glycerol 3-phosphate + NAD(+) = dihydroxyacetone phosphate + NADH + H(+). The enzyme catalyses sn-glycerol 3-phosphate + NADP(+) = dihydroxyacetone phosphate + NADPH + H(+). The protein operates within membrane lipid metabolism; glycerophospholipid metabolism. Its function is as follows. Catalyzes the reduction of the glycolytic intermediate dihydroxyacetone phosphate (DHAP) to sn-glycerol 3-phosphate (G3P), the key precursor for phospholipid synthesis. This is Glycerol-3-phosphate dehydrogenase [NAD(P)+] from Lysinibacillus sphaericus (strain C3-41).